We begin with the raw amino-acid sequence, 90 residues long: Cell division topological specificity factor (90 aa).

This sequence belongs to the MinE family.

Functionally, prevents the cell division inhibition by proteins MinC and MinD at internal division sites while permitting inhibition at polar sites. This ensures cell division at the proper site by restricting the formation of a division septum at the midpoint of the long axis of the cell. This Clostridium perfringens (strain SM101 / Type A) protein is Cell division topological specificity factor.